The chain runs to 295 residues: Acetaldehyde dehydrogenase (295 aa).

Residue 11–14 participates in NAD(+) binding; that stretch reads SGNI. C127 functions as the Acyl-thioester intermediate in the catalytic mechanism. Residues 158 to 166 and N270 contribute to the NAD(+) site; that span reads SAGPGTRAN.

This sequence belongs to the acetaldehyde dehydrogenase family.

The enzyme catalyses acetaldehyde + NAD(+) + CoA = acetyl-CoA + NADH + H(+). The polypeptide is Acetaldehyde dehydrogenase (nbaJ) (Geobacillus thermodenitrificans (strain NG80-2)).